The sequence spans 929 residues: Protein translocase subunit SecA (929 aa).

ATP contacts are provided by residues Q83, G101–T105, and D491.

Belongs to the SecA family. In terms of assembly, monomer and homodimer. Part of the essential Sec protein translocation apparatus which comprises SecA, SecYEG and auxiliary proteins SecDF. Other proteins may also be involved.

It localises to the cell inner membrane. It is found in the cellular thylakoid membrane. The protein resides in the cytoplasm. The catalysed reaction is ATP + H2O + cellular proteinSide 1 = ADP + phosphate + cellular proteinSide 2.. Functionally, part of the Sec protein translocase complex. Interacts with the SecYEG preprotein conducting channel. Has a central role in coupling the hydrolysis of ATP to the transfer of proteins into and across the cell membrane, serving as an ATP-driven molecular motor driving the stepwise translocation of polypeptide chains across the membrane. Probably participates in protein translocation into and across both the cytoplasmic and thylakoid membranes in cyanobacterial cells. The protein is Protein translocase subunit SecA of Thermosynechococcus vestitus (strain NIES-2133 / IAM M-273 / BP-1).